The following is a 492-amino-acid chain: MLSPPHSGTLEKLFQYIDLHQDEFVQTLKEWVAIESDSVQPMPRLRQELFRMMALAADKLRNLGARVDSVDLGSQQMPDGQSLPTPPIILAELGNDPKKPSVCFYGHLDVQPAQKEDGWLTDPYTLTEVDGKLYGRGATDNKGPVLAWINAVSTFRALQQDLPVNVKFILEGMEEAGSVALEELVKREKDNFFSGVDYIVISDNLWLSQKKPALTCGTRGNCYFTVEVKCRDQDFHSGTFGGILNEPMADLVALLGSLVDSSGHILVPGIYDQMAPITEEEKTMYENIDLDLEEYQKSSRVERFLFDTKEELLTHLWRYPSLSIHGIEGAFDEPGTKTVIPGRVLGKFSIRLVPHMTPSVVETQVTQHLEAVFSKRNSFNKMAVSMVLGLQPWTANINGTQYLAARRAIQTVFGVDPDMIQDGSTIPIAKIFQDITQKSVMMLPLGAVDDGEHSQNEKINRWNYIQGSKLFAAFFLELSKLHSGQQVPSGAF.

Residue His107 coordinates Zn(2+). The active site involves Asp109. Asp140 lines the Zn(2+) pocket. Residue Glu174 is the Proton acceptor of the active site. Glu175 is a binding site for Zn(2+). Ser194 is subject to Phosphoserine. 2 residues coordinate Zn(2+): Asp203 and His453.

Belongs to the peptidase M20A family. As to quaternary structure, homodimer. Zn(2+) serves as cofactor. As to expression, detected exclusively in kidney.

It localises to the secreted. It catalyses the reaction Preferential hydrolysis of the beta-Ala-|-His dipeptide (carnosine), and also anserine, Xaa-|-His dipeptides and other dipeptides including homocarnosine.. It carries out the reaction carnosine + H2O = beta-alanine + L-histidine. The enzyme catalyses anserine + H2O = N(pros)-methyl-L-histidine + beta-alanine. The catalysed reaction is L-alanyl-L-histidine + H2O = L-histidine + L-alanine. It catalyses the reaction glycyl-L-histidine + H2O = L-histidine + glycine. It carries out the reaction L-homocarnosine + H2O = 4-aminobutanoate + L-histidine. Its function is as follows. Catalyzes the peptide bond hydrolysis in Xaa-His dipeptides, displaying the highest activity toward carnosine (beta-alanyl-L-histidine) and anserine (beta-alanyl-3-methyl-histidine). In Rattus norvegicus (Rat), this protein is Beta-Ala-His dipeptidase (Cndp1).